Reading from the N-terminus, the 296-residue chain is GTPase Era (296 aa).

The region spanning 3-170 (KSGFITIVGR…LELMVKYLPE (168 aa)) is the Era-type G domain. Positions 11–18 (GRPNVGKS) are G1. A GTP-binding site is contributed by 11–18 (GRPNVGKS). The G2 stretch occupies residues 37–41 (QTTRN). The interval 58–61 (DTPG) is G3. GTP contacts are provided by residues 58–62 (DTPGI) and 120–123 (NKVD). Residues 120 to 123 (NKVD) are G4. Positions 149 to 151 (ISA) are G5. Positions 201–278 (LSQEVPHGIA…NIKIWVKVRK (78 aa)) constitute a KH type-2 domain.

This sequence belongs to the TRAFAC class TrmE-Era-EngA-EngB-Septin-like GTPase superfamily. Era GTPase family. Monomer.

The protein resides in the cytoplasm. It is found in the cell membrane. Functionally, an essential GTPase that binds both GDP and GTP, with rapid nucleotide exchange. Plays a role in 16S rRNA processing and 30S ribosomal subunit biogenesis and possibly also in cell cycle regulation and energy metabolism. This Clostridium perfringens (strain ATCC 13124 / DSM 756 / JCM 1290 / NCIMB 6125 / NCTC 8237 / Type A) protein is GTPase Era.